Reading from the N-terminus, the 313-residue chain is Porphobilinogen deaminase (313 aa).

C242 is modified (S-(dipyrrolylmethanemethyl)cysteine).

It belongs to the HMBS family. Monomer. It depends on dipyrromethane as a cofactor.

It carries out the reaction 4 porphobilinogen + H2O = hydroxymethylbilane + 4 NH4(+). It participates in porphyrin-containing compound metabolism; protoporphyrin-IX biosynthesis; coproporphyrinogen-III from 5-aminolevulinate: step 2/4. Tetrapolymerization of the monopyrrole PBG into the hydroxymethylbilane pre-uroporphyrinogen in several discrete steps. The protein is Porphobilinogen deaminase of Klebsiella pneumoniae (strain 342).